We begin with the raw amino-acid sequence, 251 residues long: Triosephosphate isomerase (251 aa).

9-11 (NWK) is a binding site for substrate. H96 acts as the Electrophile in catalysis. The active-site Proton acceptor is the E167. Substrate-binding positions include G173, S213, and 234–235 (GG).

It belongs to the triosephosphate isomerase family. In terms of assembly, homodimer.

Its subcellular location is the cytoplasm. The enzyme catalyses D-glyceraldehyde 3-phosphate = dihydroxyacetone phosphate. Its pathway is carbohydrate biosynthesis; gluconeogenesis. The protein operates within carbohydrate degradation; glycolysis; D-glyceraldehyde 3-phosphate from glycerone phosphate: step 1/1. Its function is as follows. Involved in the gluconeogenesis. Catalyzes stereospecifically the conversion of dihydroxyacetone phosphate (DHAP) to D-glyceraldehyde-3-phosphate (G3P). The chain is Triosephosphate isomerase from Bacteroides fragilis (strain ATCC 25285 / DSM 2151 / CCUG 4856 / JCM 11019 / LMG 10263 / NCTC 9343 / Onslow / VPI 2553 / EN-2).